The chain runs to 174 residues: Methylated protein MJ0556 (174 aa).

2 CBS domains span residues 28-87 (MISG…YLNV) and 91-156 (MLKN…IIKE).

In terms of processing, methylated at an undetermined residue between Ser-2 and Asp-26.

In Methanocaldococcus jannaschii (strain ATCC 43067 / DSM 2661 / JAL-1 / JCM 10045 / NBRC 100440) (Methanococcus jannaschii), this protein is Methylated protein MJ0556.